The sequence spans 345 residues: MTVVIPIGRGRSPAGASRERVGVLLVNLGTPDTADARGLRVYLKEFLSDPRVIEKQGLVWKLALNGVILNTRPRRKARDYLKIWNTEQNESPLKTITRAQSDKLAAAIADHGHVVVDWAMRYGNPSMRSRIAALTAQGCDRLLVVPLYPQYSAATSATVCDEAFRVLGEMRAQPTLRVTPPYYDDPDYIDALAVSIERHLASLSFTPEIIMASFHGMPQAYIDKGDPYQAQCAATTEALRKRMGLDASKLMLTFQSRFGFDQWLQPYTDKTVEKLAKDGVKRLAVVTPGFSADCLETLEEIAQENAEIFRHNGGEEFSAIPCLNDSDSGMDVIRKLVLRELQGWI.

Residues H215 and E296 each coordinate Fe cation.

Belongs to the ferrochelatase family.

The protein localises to the cytoplasm. The catalysed reaction is heme b + 2 H(+) = protoporphyrin IX + Fe(2+). The protein operates within porphyrin-containing compound metabolism; protoheme biosynthesis; protoheme from protoporphyrin-IX: step 1/1. Functionally, catalyzes the ferrous insertion into protoporphyrin IX. This chain is Ferrochelatase, found in Nitrobacter hamburgensis (strain DSM 10229 / NCIMB 13809 / X14).